A 21-amino-acid polypeptide reads, in one-letter code: Granule-bound starch synthase 1 (21 aa).

This sequence belongs to the glycosyltransferase 1 family. Bacterial/plant glycogen synthase subfamily.

The protein resides in the plastid. Its subcellular location is the chloroplast. It localises to the amyloplast. It catalyses the reaction an NDP-alpha-D-glucose + [(1-&gt;4)-alpha-D-glucosyl](n) = [(1-&gt;4)-alpha-D-glucosyl](n+1) + a ribonucleoside 5'-diphosphate + H(+). The protein operates within glycan biosynthesis; starch biosynthesis. In Secale cereale (Rye), this protein is Granule-bound starch synthase 1.